The primary structure comprises 257 residues: UPF0246 protein Shew185_1115 (257 aa).

It belongs to the UPF0246 family.

This Shewanella baltica (strain OS185) protein is UPF0246 protein Shew185_1115.